A 591-amino-acid polypeptide reads, in one-letter code: V-type ATP synthase alpha chain (591 aa).

233–240 contacts ATP; sequence GPFGAGKT.

The protein belongs to the ATPase alpha/beta chains family.

The catalysed reaction is ATP + H2O + 4 H(+)(in) = ADP + phosphate + 5 H(+)(out). Produces ATP from ADP in the presence of a proton gradient across the membrane. The V-type alpha chain is a catalytic subunit. This is V-type ATP synthase alpha chain from Streptococcus pyogenes serotype M3 (strain ATCC BAA-595 / MGAS315).